The sequence spans 143 residues: 3-hydroxyacyl-[acyl-carrier-protein] dehydratase FabZ (143 aa).

H48 is an active-site residue.

The protein belongs to the thioester dehydratase family. FabZ subfamily.

It is found in the cytoplasm. The catalysed reaction is a (3R)-hydroxyacyl-[ACP] = a (2E)-enoyl-[ACP] + H2O. In terms of biological role, involved in unsaturated fatty acids biosynthesis. Catalyzes the dehydration of short chain beta-hydroxyacyl-ACPs and long chain saturated and unsaturated beta-hydroxyacyl-ACPs. This chain is 3-hydroxyacyl-[acyl-carrier-protein] dehydratase FabZ, found in Roseiflexus castenholzii (strain DSM 13941 / HLO8).